Consider the following 588-residue polypeptide: DNA ligase (588 aa).

Glu248 is an ATP binding site. Lys250 (N6-AMP-lysine intermediate) is an active-site residue. 6 residues coordinate ATP: Arg255, Arg270, Glu300, Phe341, Arg418, and Lys424.

It belongs to the ATP-dependent DNA ligase family. It depends on Mg(2+) as a cofactor.

The enzyme catalyses ATP + (deoxyribonucleotide)n-3'-hydroxyl + 5'-phospho-(deoxyribonucleotide)m = (deoxyribonucleotide)n+m + AMP + diphosphate.. DNA ligase that seals nicks in double-stranded DNA during DNA replication, DNA recombination and DNA repair. This Thermoplasma volcanium (strain ATCC 51530 / DSM 4299 / JCM 9571 / NBRC 15438 / GSS1) protein is DNA ligase.